Reading from the N-terminus, the 316-residue chain is MPLDTLRIATRKSPLAVWQAEHVAALVKARHPGVRVELVGMTTQGDRILDTPLAKVGGKGLFVKELETGLLEGRADIAVHSMKDVPMELPEGLCLPVILDREDPRDAFVSNTFKSLDELPRDARVGTSSLRRQCQLRHDHPHFQILDLRGNVNTRLAKLDAGEFDAIILAAAGLKRLGFEVRIASEITPEQSLPAIGQGAIGIECRENDPEVMALIGSLDDPDTHVRVAAERAMNARLNGGCQVPIAGYAELTDADTLRLRGLVGEPDGSLILRAELSGPRAEAEALGRAVADLLLHEGAGPILAELGLGPDADRS.

The residue at position 242 (Cys-242) is an S-(dipyrrolylmethanemethyl)cysteine.

Belongs to the HMBS family. In terms of assembly, monomer. Dipyrromethane is required as a cofactor.

The enzyme catalyses 4 porphobilinogen + H2O = hydroxymethylbilane + 4 NH4(+). The protein operates within porphyrin-containing compound metabolism; protoporphyrin-IX biosynthesis; coproporphyrinogen-III from 5-aminolevulinate: step 2/4. Tetrapolymerization of the monopyrrole PBG into the hydroxymethylbilane pre-uroporphyrinogen in several discrete steps. This chain is Porphobilinogen deaminase, found in Thioalkalivibrio sulfidiphilus (strain HL-EbGR7).